The chain runs to 274 residues: 4-deoxy-L-threo-5-hexosulose-uronate ketol-isomerase (274 aa).

4 residues coordinate Zn(2+): His192, His194, Glu199, and His241.

Belongs to the KduI family. The cofactor is Zn(2+).

It carries out the reaction 5-dehydro-4-deoxy-D-glucuronate = 3-deoxy-D-glycero-2,5-hexodiulosonate. It participates in glycan metabolism; pectin degradation; 2-dehydro-3-deoxy-D-gluconate from pectin: step 4/5. Its function is as follows. Catalyzes the isomerization of 5-dehydro-4-deoxy-D-glucuronate to 3-deoxy-D-glycero-2,5-hexodiulosonate. This is 4-deoxy-L-threo-5-hexosulose-uronate ketol-isomerase from Cereibacter sphaeroides (strain ATCC 17025 / ATH 2.4.3) (Rhodobacter sphaeroides).